Consider the following 335-residue polypeptide: MAADHTDVLIVGAGPAGLFAGFYVGMRGLSFRFVDPLPEPGGQLTALYPEKYIYDVAGFPKVYAKDLVKGLVEQVAPFNPVYSLGERAETLEREGDLFKVTTSQGNAYTAKAVIIAAGVGAFEPRRIGAPGEREFEGRGVYYAVKSKAEFQGKRVLIVGGGDSAVDWALNLLDTARRITLIHRRPQFRAHEASVKELMKAHEEGRLEVLTPYELRRVEGDERVRWAVVFHNQTQEELALEVDAVLILAGYITKLGPLANWGLALEKNKIKVDTTMATSIPGVYACGDIVTYPGKLPLIVLGFGEAAIAANHAAAYANPALKVNPGHSSEKAAPGT.

Residues D35, Q43, Y48, A88, F122, D287, and S328 each contribute to the FAD site.

It belongs to the ferredoxin--NADP reductase type 2 family. Homodimer. It depends on FAD as a cofactor.

The enzyme catalyses 2 reduced [2Fe-2S]-[ferredoxin] + NADP(+) + H(+) = 2 oxidized [2Fe-2S]-[ferredoxin] + NADPH. This Thermus thermophilus (strain ATCC BAA-163 / DSM 7039 / HB27) protein is Ferredoxin--NADP reductase.